A 333-amino-acid chain; its full sequence is Cytochrome f (333 aa).

The N-terminal stretch at 1-37 is a signal peptide; sequence MRNSCKKARRTRPLKATIQALLVAIATMTFFFTSDIA. Residues 38 to 298 are Cytoplasmic-facing; that stretch reads LPQSAAAYPF…TEIVLQDPNR (261 aa). Heme contacts are provided by Tyr-45, Cys-66, Cys-69, and His-70. The helical transmembrane segment at 299 to 319 threads the bilayer; the sequence is VKWMIAFICLVMLAQLMLILK. Residues 320-333 lie on the Lumenal, thylakoid side of the membrane; the sequence is KKQVEKVQAAEMNF.

This sequence belongs to the cytochrome f family. In terms of assembly, the 4 large subunits of the cytochrome b6-f complex are cytochrome b6, subunit IV (17 kDa polypeptide, PetD), cytochrome f and the Rieske protein, while the 4 small subunits are PetG, PetL, PetM and PetN. The complex functions as a dimer. Requires heme as cofactor.

The protein resides in the cellular thylakoid membrane. In terms of biological role, component of the cytochrome b6-f complex, which mediates electron transfer between photosystem II (PSII) and photosystem I (PSI), cyclic electron flow around PSI, and state transitions. The polypeptide is Cytochrome f (petA) (Mastigocladus laminosus (Fischerella sp.)).